The chain runs to 78 residues: uncharacterized protein (78 aa).

The segment at 51–78 is disordered; it reads GGKWDGGGSGGKWNGGGGSGGGSWKKWN.

This is an uncharacterized protein from Dictyostelium discoideum (Social amoeba).